A 736-amino-acid polypeptide reads, in one-letter code: MKHLIIVESPAKAKTIKNFLDKNYEVIASKGHVRDLSKFALGIKIDETGFTPNYVVDKDHKELVKQIIELSKKASITYIATDEDREGEAIGYHVACLIGGKLESYPRIVFHEITQNAILNALKTPRKIDMSKVNAQQARRFLDRIVGFKLSSLIASKITKGLSAGRVQSAALKLVIDKEREIKAFKPLTYFTLDAYFESHLEAQLISYKGNKLKAQELIDEKKAQEIKNELEKESYAISSIVKKSKKSPTPPPFMTSTLQQSASSLLGFSPTKTMSIAQKLYEGVATPQGVMGVITYMRTDSLNIAKEALEEARNKILKDYGKDYLPPKAKVYSSKNKNAQEAHEAIRPTSIILEPNALKDYLKPEELRLYTLIYKRFLASQMQDALFESQSVVVACEKGEFKASGRKLLFDGYYKILGNDDKDKLLPNLKENDPIKLEKLESNAHVTEPPARYSEASLIKVLESLGIGRPSTYAPTISLLQNRDYIKVEKKQISALESAFKVIEILEKHFEEIVDSKFSASLEEELDNIAQNKADYQQVLKDFYYPFMDKIEAGKKNIISQKVHEKTGQSCPKCGGELVKKNSRYGEFIACNNYPKCKYVKQTESANDEADQELCEKCGGEMVQKFSRNGAFLACNNYPECKNTKSLKNTPNAKETIEGVKCPECGGDIALKRSKKGSFYGCNNYPKCNFLSNHKPINKRCEKCHYLMSERIYRKKKAHECIKCKERVFLEEDNG.

A Toprim domain is found at Lys2–Ile113. Mg(2+) is bound by residues Glu8 and Asp82. A Topo IA-type catalytic domain is found at Asp129–Ile552. An interaction with DNA region spans residues Ser163–Gln168. Tyr297 functions as the O-(5'-phospho-DNA)-tyrosine intermediate in the catalytic mechanism. C4-type zinc fingers lie at residues Cys572 to Cys598, Cys616 to Cys642, Cys663 to Cys689, and Cys702 to Cys725.

It belongs to the type IA topoisomerase family. Monomer. It depends on Mg(2+) as a cofactor.

The enzyme catalyses ATP-independent breakage of single-stranded DNA, followed by passage and rejoining.. Releases the supercoiling and torsional tension of DNA, which is introduced during the DNA replication and transcription, by transiently cleaving and rejoining one strand of the DNA duplex. Introduces a single-strand break via transesterification at a target site in duplex DNA. The scissile phosphodiester is attacked by the catalytic tyrosine of the enzyme, resulting in the formation of a DNA-(5'-phosphotyrosyl)-enzyme intermediate and the expulsion of a 3'-OH DNA strand. The free DNA strand then undergoes passage around the unbroken strand, thus removing DNA supercoils. Finally, in the religation step, the DNA 3'-OH attacks the covalent intermediate to expel the active-site tyrosine and restore the DNA phosphodiester backbone. This is DNA topoisomerase 1 from Helicobacter pylori (strain ATCC 700392 / 26695) (Campylobacter pylori).